Here is a 299-residue protein sequence, read N- to C-terminus: Probable arylamine N-acetyltransferase 2 (299 aa).

Catalysis depends on Cys75, which acts as the Acyl-thioester intermediate. Active-site residues include His115 and Asp130.

The protein belongs to the arylamine N-acetyltransferase family.

It catalyses the reaction an arylamine + acetyl-CoA = an N-acetylarylamine + CoA. The protein is Probable arylamine N-acetyltransferase 2 of Dictyostelium discoideum (Social amoeba).